Here is a 282-residue protein sequence, read N- to C-terminus: 4-diphosphocytidyl-2-C-methyl-D-erythritol kinase (282 aa).

Residue Lys15 is part of the active site. 98 to 108 (PMGGGVGGGSS) contributes to the ATP binding site. Residue Asp140 is part of the active site.

The protein belongs to the GHMP kinase family. IspE subfamily.

It catalyses the reaction 4-CDP-2-C-methyl-D-erythritol + ATP = 4-CDP-2-C-methyl-D-erythritol 2-phosphate + ADP + H(+). The protein operates within isoprenoid biosynthesis; isopentenyl diphosphate biosynthesis via DXP pathway; isopentenyl diphosphate from 1-deoxy-D-xylulose 5-phosphate: step 3/6. Its function is as follows. Catalyzes the phosphorylation of the position 2 hydroxy group of 4-diphosphocytidyl-2C-methyl-D-erythritol. This Azoarcus sp. (strain BH72) protein is 4-diphosphocytidyl-2-C-methyl-D-erythritol kinase.